A 182-amino-acid polypeptide reads, in one-letter code: UPF0316 protein BCB4264_A3368 (182 aa).

The next 3 membrane-spanning stretches (helical) occupy residues L6–V26, S32–F52, and W58–I78.

The protein belongs to the UPF0316 family.

The protein resides in the cell membrane. The sequence is that of UPF0316 protein BCB4264_A3368 from Bacillus cereus (strain B4264).